Here is a 499-residue protein sequence, read N- to C-terminus: Putative lipase atg15 (499 aa).

Topologically, residues 1–9 (MSIGEVSDS) are cytoplasmic. Residues 10–30 (AGHLASLVLPIEVAPIAPLIP) form a helical; Signal-anchor for type II membrane protein membrane-spanning segment. Residues 31–499 (EPPATAEHIF…PDSPERNEEM (469 aa)) are Lumenal-facing. N-linked (GlcNAc...) asparagine glycosylation is found at Asn-170, Asn-191, Asn-192, Asn-250, and Asn-274. Ser-290 (charge relay system) is an active-site residue. Asn-436 is a glycosylation site (N-linked (GlcNAc...) asparagine). Residues 436–499 (NGTETTTTSS…PDSPERNEEM (64 aa)) form a disordered region. Residues 438 to 454 (TETTTTSSAPTTTSISR) show a composition bias toward low complexity.

This sequence belongs to the AB hydrolase superfamily. Lipase family. As to quaternary structure, binds to both phosphatidylinositol (PI) and phosphatidylinositol 3,5-bisphosphate (PIP2).

Its subcellular location is the endosome. The protein resides in the multivesicular body membrane. It localises to the prevacuolar compartment membrane. The catalysed reaction is a triacylglycerol + H2O = a diacylglycerol + a fatty acid + H(+). Functionally, lipase which is essential for lysis of subvacuolar cytoplasm to vacuole targeted bodies and intravacuolar autophagic bodies. Involved in the lysis of intravacuolar multivesicular body (MVB) vesicles. The intravacuolar membrane disintegration by atg15 is critical to life span extension. This chain is Putative lipase atg15 (atg15), found in Chaetomium globosum (strain ATCC 6205 / CBS 148.51 / DSM 1962 / NBRC 6347 / NRRL 1970) (Soil fungus).